Reading from the N-terminus, the 364-residue chain is Putative [LysW]-aminoadipate semialdehyde/glutamate semialdehyde transaminase (364 aa).

Pyridoxal 5'-phosphate-binding positions include 90–91 (GT) and Phe117. Arg120 contacts substrate. 202–205 (DEVQ) is a binding site for pyridoxal 5'-phosphate. Lys230 is subject to N6-(pyridoxal phosphate)lysine. Ser254 serves as a coordination point for substrate. Thr255 lines the pyridoxal 5'-phosphate pocket.

Belongs to the class-III pyridoxal-phosphate-dependent aminotransferase family. LysJ subfamily. Homodimer. Pyridoxal 5'-phosphate serves as cofactor.

The protein resides in the cytoplasm. The catalysed reaction is [amino-group carrier protein]-C-terminal-gamma-(L-lysyl)-L-glutamate + 2-oxoglutarate = [amino-group carrier protein]-C-terminal-N-(1-carboxy-5-oxopentan-1-yl)-L-glutamine + L-glutamate. It catalyses the reaction [amino-group carrier protein]-C-terminal-gamma-(L-ornithyl)-L-glutamate + 2-oxoglutarate = [amino-group carrier protein]-C-terminal-gamma-(L-glutamyl-5-semialdehyde)-L-glutamate + L-glutamate. The protein operates within amino-acid biosynthesis; L-lysine biosynthesis via AAA pathway; L-lysine from L-alpha-aminoadipate (Thermus route): step 4/5. It participates in amino-acid biosynthesis; L-arginine biosynthesis. Involved in both the arginine and lysine biosynthetic pathways. This is Putative [LysW]-aminoadipate semialdehyde/glutamate semialdehyde transaminase from Pyrococcus abyssi (strain GE5 / Orsay).